A 461-amino-acid chain; its full sequence is Fumarate hydratase class II (461 aa).

Residues 98-100 (SGT), 129-132 (HPND), 139-141 (SSN), and Thr187 each bind substrate. Residue His188 is the Proton donor/acceptor of the active site. Residue Ser318 is part of the active site. Substrate-binding positions include Ser319 and 324 to 326 (KVN).

It belongs to the class-II fumarase/aspartase family. Fumarase subfamily. Homotetramer.

It localises to the cytoplasm. It catalyses the reaction (S)-malate = fumarate + H2O. The protein operates within carbohydrate metabolism; tricarboxylic acid cycle; (S)-malate from fumarate: step 1/1. Its function is as follows. Involved in the TCA cycle. Catalyzes the stereospecific interconversion of fumarate to L-malate. The sequence is that of Fumarate hydratase class II from Rickettsia prowazekii (strain Madrid E).